Consider the following 170-residue polypeptide: Cathelicidin antimicrobial peptide (170 aa).

Positions 1 to 30 (MKTQRDGPSLGRWSLVLLLLGLVMPLAIVA) are cleaved as a signal peptide. A propeptide spans 31–131 (QVLSYQEAVL…DISCDKDNRR (101 aa)) (cathelin-like domain (CLD)). Cystine bridges form between cysteine 86/cysteine 97 and cysteine 108/cysteine 125. Positions 150–162 (LKKIGQKIKDFLG) are active core.

The protein belongs to the cathelicidin family. In terms of assembly, monomer, homodimer or homotrimer (in vitro). Oligomerizes as tetra- or hexamer in solution (in vitro). Post-translationally, proteolytically cleaved by proteinase PRTN3 into antibacterial peptide LL-37. Proteolytically cleaved by cathepsin CTSG and neutrophil elastase ELANE. Resistant to proteolytic degradation in solution, and when bound to both zwitterionic (mimicking mammalian membranes) and negatively charged membranes (mimicking bacterial membranes). In terms of processing, after secretion onto the skin surface, the CAMP gene product is processed by a serine protease-dependent mechanism into multiple novel antimicrobial peptides distinct from and shorter than cathelicidin LL-37. These peptides show enhanced antimicrobial action, acquiring the ability to kill skin pathogens such as S.aureus, E.coli and C.albicans. These peptides have lost the ability to stimulate CXCL8/IL8 release from keratinocytes. The peptides act synergistically, killing bacteria at lower concentrations when present together, and maintain activity at increased salt condition.

The protein resides in the secreted. The protein localises to the vesicle. Its function is as follows. Antimicrobial protein that is an integral component of the innate immune system. Binds to bacterial lipopolysaccharides (LPS). Acts via neutrophil N-formyl peptide receptors to enhance the release of CXCL2. Postsecretory processing generates multiple cathelicidin antimicrobial peptides with various lengths which act as a topical antimicrobial defense in sweat on skin. The unprocessed precursor form, cathelicidin antimicrobial peptide, inhibits the growth of Gram-negative E.coli and E.aerogenes with efficiencies comparable to that of the mature peptide LL-37 (in vitro). Functionally, antimicrobial peptide that is an integral component of the innate immune system. Binds to bacterial lipopolysaccharides (LPS). Causes membrane permeabilization by forming transmembrane pores (in vitro). Causes lysis of E.coli. Exhibits antimicrobial activity against Gram-negative bacteria such as P.aeruginosa, S.typhimurium, E.aerogenes, E.coli and P.syringae, Gram-positive bacteria such as L.monocytogenes, S.epidermidis, S.pyogenes and S.aureus, as well as vancomycin-resistant enterococci (in vitro). Exhibits antimicrobial activity against methicillin-resistant S.aureus, P.mirabilis, and C.albicans in low-salt media, but not in media containing 100 mM NaCl (in vitro). Forms chiral supramolecular assemblies with quinolone signal (PQS) molecules of P.aeruginosa, which may lead to interference of bacterial quorum signaling and perturbance of bacterial biofilm formation. May form supramolecular fiber-like assemblies on bacterial membranes. Induces cytokine and chemokine producation as well as TNF/TNFA and CSF2/GMCSF production in normal human keratinocytes. Exhibits hemolytic activity against red blood cells. In terms of biological role, exhibits antimicrobial activity against E.coli and B.megaterium (in vitro). The sequence is that of Cathelicidin antimicrobial peptide from Chlorocebus aethiops (Green monkey).